We begin with the raw amino-acid sequence, 77 residues long: Acyl carrier protein homolog (77 aa).

In terms of domain architecture, Carrier spans 1-76 (MSINIKDLIM…DLINAFEDVL (76 aa)). Ser36 is subject to O-(pantetheine 4'-phosphoryl)serine.

4'-phosphopantetheine is transferred from CoA to a specific serine of the apo-ACP-like protein.

The protein operates within lipid metabolism; fatty acid biosynthesis. Its function is as follows. Carrier of the growing fatty acid chain in fatty acid biosynthesis. In Ureaplasma parvum serovar 3 (strain ATCC 700970), this protein is Acyl carrier protein homolog.